The following is a 352-amino-acid chain: UDP-N-acetylglucosamine--N-acetylmuramyl-(pentapeptide) pyrophosphoryl-undecaprenol N-acetylglucosamine transferase (352 aa).

Serine 195 and glutamine 287 together coordinate UDP-N-acetyl-alpha-D-glucosamine.

This sequence belongs to the glycosyltransferase 28 family. MurG subfamily.

The protein localises to the cell membrane. The catalysed reaction is Mur2Ac(oyl-L-Ala-gamma-D-Glu-L-Lys-D-Ala-D-Ala)-di-trans,octa-cis-undecaprenyl diphosphate + UDP-N-acetyl-alpha-D-glucosamine = beta-D-GlcNAc-(1-&gt;4)-Mur2Ac(oyl-L-Ala-gamma-D-Glu-L-Lys-D-Ala-D-Ala)-di-trans,octa-cis-undecaprenyl diphosphate + UDP + H(+). It functions in the pathway cell wall biogenesis; peptidoglycan biosynthesis. Functionally, cell wall formation. Catalyzes the transfer of a GlcNAc subunit on undecaprenyl-pyrophosphoryl-MurNAc-pentapeptide (lipid intermediate I) to form undecaprenyl-pyrophosphoryl-MurNAc-(pentapeptide)GlcNAc (lipid intermediate II). This is UDP-N-acetylglucosamine--N-acetylmuramyl-(pentapeptide) pyrophosphoryl-undecaprenol N-acetylglucosamine transferase from Streptococcus pneumoniae serotype 4 (strain ATCC BAA-334 / TIGR4).